Here is a 380-residue protein sequence, read N- to C-terminus: Guanine nucleotide-binding protein subunit beta (380 aa).

7 WD repeats span residues 64-103 (GHSG…KTHA), 106-145 (LHCP…DRDG), 155-195 (GHKG…RISI), 203-243 (GHTA…RAVR), 247-286 (GHEG…QLQV), 296-335 (NELP…VVLN), and 342-380 (SHEG…RKIV).

This sequence belongs to the WD repeat G protein beta family. In terms of assembly, g proteins are composed of 3 units, alpha, beta and gamma. Interacts with the gamma subunits RGG1 and RGG2.

It is found in the cell membrane. Functionally, guanine nucleotide-binding proteins (G proteins) are involved as modulators or transducers in various transmembrane signaling systems. The beta and gamma chains are required for the GTPase activity, for replacement of GDP by GTP, and for G protein-effector interaction. The protein is Guanine nucleotide-binding protein subunit beta of Oryza sativa subsp. indica (Rice).